We begin with the raw amino-acid sequence, 306 residues long: Ribonuclease H2 subunit B (306 aa).

The disordered stretch occupies residues 232-285; sequence LPDLSSPTPEPPVKKRRVSDAPVEADEDYTKYNSDNKSRKSNSKMTAAQKSLAK. Basic and acidic residues predominate over residues 259-269; it reads DYTKYNSDNKS.

The protein belongs to the RNase H2 subunit B family. The RNase H2 complex is a heterotrimer composed of the catalytic subunit RNASEH2A and the non-catalytic subunits RNASEH2B and RNASEH2C.

Its subcellular location is the nucleus. Its function is as follows. Non catalytic subunit of RNase H2, an endonuclease that specifically degrades the RNA of RNA:DNA hybrids. Participates in DNA replication, possibly by mediating the removal of lagging-strand Okazaki fragment RNA primers during DNA replication. Mediates the excision of single ribonucleotides from DNA:RNA duplexes. The protein is Ribonuclease H2 subunit B (rnaseh2b) of Xenopus laevis (African clawed frog).